Here is a 473-residue protein sequence, read N- to C-terminus: Aspartyl/glutamyl-tRNA(Asn/Gln) amidotransferase subunit B (473 aa).

This sequence belongs to the GatB/GatE family. GatB subfamily. As to quaternary structure, heterotrimer of A, B and C subunits.

It carries out the reaction L-glutamyl-tRNA(Gln) + L-glutamine + ATP + H2O = L-glutaminyl-tRNA(Gln) + L-glutamate + ADP + phosphate + H(+). The catalysed reaction is L-aspartyl-tRNA(Asn) + L-glutamine + ATP + H2O = L-asparaginyl-tRNA(Asn) + L-glutamate + ADP + phosphate + 2 H(+). Its function is as follows. Allows the formation of correctly charged Asn-tRNA(Asn) or Gln-tRNA(Gln) through the transamidation of misacylated Asp-tRNA(Asn) or Glu-tRNA(Gln) in organisms which lack either or both of asparaginyl-tRNA or glutaminyl-tRNA synthetases. The reaction takes place in the presence of glutamine and ATP through an activated phospho-Asp-tRNA(Asn) or phospho-Glu-tRNA(Gln). This Mycoplasmopsis synoviae (strain 53) (Mycoplasma synoviae) protein is Aspartyl/glutamyl-tRNA(Asn/Gln) amidotransferase subunit B.